The following is a 514-amino-acid chain: 2,3-bisphosphoglycerate-independent phosphoglycerate mutase (514 aa).

D14 and S64 together coordinate Mn(2+). S64 functions as the Phosphoserine intermediate in the catalytic mechanism. Substrate is bound by residues H125, 155 to 156 (RD), R187, R193, 263 to 266 (RADR), and K336. Mn(2+) is bound by residues D403, H407, D444, H445, and H463.

It belongs to the BPG-independent phosphoglycerate mutase family. As to quaternary structure, monomer. Requires Mn(2+) as cofactor.

The catalysed reaction is (2R)-2-phosphoglycerate = (2R)-3-phosphoglycerate. Its pathway is carbohydrate degradation; glycolysis; pyruvate from D-glyceraldehyde 3-phosphate: step 3/5. Catalyzes the interconversion of 2-phosphoglycerate and 3-phosphoglycerate. The sequence is that of 2,3-bisphosphoglycerate-independent phosphoglycerate mutase from Shewanella halifaxensis (strain HAW-EB4).